We begin with the raw amino-acid sequence, 231 residues long: Uracil phosphoribosyltransferase (231 aa).

A GTP-binding site is contributed by 38–42 (KGLVR). 5-phospho-alpha-D-ribose 1-diphosphate is bound by residues Arg87, Arg112, and 140–148 (DPMIATGST). Uracil contacts are provided by residues Ile203 and 208–210 (GDA). 5-phospho-alpha-D-ribose 1-diphosphate is bound at residue Asp209.

It belongs to the UPRTase family. Mg(2+) serves as cofactor.

The enzyme catalyses UMP + diphosphate = 5-phospho-alpha-D-ribose 1-diphosphate + uracil. The protein operates within pyrimidine metabolism; UMP biosynthesis via salvage pathway; UMP from uracil: step 1/1. Allosterically activated by GTP. Its function is as follows. Catalyzes the conversion of uracil and 5-phospho-alpha-D-ribose 1-diphosphate (PRPP) to UMP and diphosphate. The polypeptide is Uracil phosphoribosyltransferase (Methanococcus maripaludis (strain C6 / ATCC BAA-1332)).